We begin with the raw amino-acid sequence, 136 residues long: Small ribosomal subunit protein uS9 (136 aa).

The interval 115–136 is disordered; it reads KVKERKKPGLRKARKARQFSKR. The segment covering 117 to 136 has biased composition (basic residues); the sequence is KERKKPGLRKARKARQFSKR.

It belongs to the universal ribosomal protein uS9 family.

In Mycoplasmopsis pulmonis (strain UAB CTIP) (Mycoplasma pulmonis), this protein is Small ribosomal subunit protein uS9.